The primary structure comprises 146 residues: uncharacterized protein (146 aa).

The first 17 residues, methionine 1 to alanine 17, serve as a signal peptide directing secretion. Disordered stretches follow at residues asparagine 27 to leucine 54 and glutamate 70 to proline 146. Positions glutamine 32–leucine 54 are enriched in low complexity. Residues serine 77–histidine 118 are compositionally biased toward polar residues.

This is an uncharacterized protein from Escherichia coli (strain K12).